We begin with the raw amino-acid sequence, 126 residues long: Apolipoprotein C-IV (126 aa).

The first 27 residues, 1 to 27 (MSLLRHRLQALPSLCLCVLVLACIGAC), serve as a signal peptide directing secretion.

It belongs to the apolipoprotein C4 family.

It is found in the secreted. Functionally, may participate in lipoprotein metabolism. This is Apolipoprotein C-IV (APOC4) from Aotus nancymaae (Ma's night monkey).